We begin with the raw amino-acid sequence, 761 residues long: uncharacterized protein (761 aa).

Residue Met1 is modified to N-acetylmethionine. Disordered regions lie at residues 1–82, 229–320, and 590–640; these read MEHQ…SSSS, SNII…SALA, and FNRA…PEQQ. The span at 13–27 shows a compositional bias: polar residues; sequence NSGSNRVTVYNGTTL. Residues 28–45 are compositionally biased toward low complexity; the sequence is PTMPKSATPTSSSTTVTT. Polar residues-rich tracts occupy residues 244 to 259, 266 to 276, 590 to 604, and 627 to 640; these read TPVS…SSPE, NTTSSSSTSDH, FNRA…STDD, and SKNS…PEQQ.

Phosphorylated by CDC28.

This is an uncharacterized protein from Saccharomyces cerevisiae (strain ATCC 204508 / S288c) (Baker's yeast).